The chain runs to 161 residues: 4-hydroxybenzoyl-CoA reductase subunit gamma (161 aa).

The 2Fe-2S ferredoxin-type domain occupies 3–79; the sequence is NILRLTLNGR…GKKVETVESL (77 aa). [2Fe-2S] cluster-binding residues include Cys-41, Cys-46, Cys-49, Cys-61, Cys-100, Cys-103, Cys-135, and Cys-137.

In terms of assembly, heterohexamer of two alpha, two beta and two gamma subunits. [2Fe-2S] cluster serves as cofactor.

The catalysed reaction is oxidized 2[4Fe-4S]-[ferredoxin] + benzoyl-CoA + H2O = 4-hydroxybenzoyl-CoA + reduced 2[4Fe-4S]-[ferredoxin] + 2 H(+). Inactivated by low concentrations of cyanide in vitro. Its function is as follows. Component of a complex that catalyzes the reductive dehydroxylation of 4-hydroxybenzoyl-CoA to benzoyl-CoA. Reaction is not reversible. Is a key enzyme in the anaerobic degradation of phenolic compounds. This Thauera aromatica protein is 4-hydroxybenzoyl-CoA reductase subunit gamma (hcrC).